A 273-amino-acid polypeptide reads, in one-letter code: Dermonecrotic toxin LhSicTox-alphaIA2biv (273 aa).

H5 is an active-site residue. Positions 25 and 27 each coordinate Mg(2+). The active-site Nucleophile is H41. 2 cysteine pairs are disulfide-bonded: C45–C51 and C47–C190. D85 contributes to the Mg(2+) binding site.

The protein belongs to the arthropod phospholipase D family. Class II subfamily. Requires Mg(2+) as cofactor. Expressed by the venom gland.

It localises to the secreted. The enzyme catalyses an N-(acyl)-sphingosylphosphocholine = an N-(acyl)-sphingosyl-1,3-cyclic phosphate + choline. It catalyses the reaction an N-(acyl)-sphingosylphosphoethanolamine = an N-(acyl)-sphingosyl-1,3-cyclic phosphate + ethanolamine. The catalysed reaction is a 1-acyl-sn-glycero-3-phosphocholine = a 1-acyl-sn-glycero-2,3-cyclic phosphate + choline. It carries out the reaction a 1-acyl-sn-glycero-3-phosphoethanolamine = a 1-acyl-sn-glycero-2,3-cyclic phosphate + ethanolamine. Functionally, dermonecrotic toxins cleave the phosphodiester linkage between the phosphate and headgroup of certain phospholipids (sphingolipid and lysolipid substrates), forming an alcohol (often choline) and a cyclic phosphate. This toxin acts on sphingomyelin (SM). It may also act on ceramide phosphoethanolamine (CPE), lysophosphatidylcholine (LPC) and lysophosphatidylethanolamine (LPE), but not on lysophosphatidylserine (LPS), and lysophosphatidylglycerol (LPG). It acts by transphosphatidylation, releasing exclusively cyclic phosphate products as second products. Induces dermonecrosis, hemolysis, increased vascular permeability, edema, inflammatory response, and platelet aggregation. This chain is Dermonecrotic toxin LhSicTox-alphaIA2biv, found in Loxosceles hirsuta (Recluse spider).